The primary structure comprises 145 residues: Ribosome-binding factor A (145 aa).

Residues 1-10 (MKRPSSHGRR) show a composition bias toward basic residues. 2 disordered regions span residues 1-21 (MKRP…RQLR) and 124-145 (DDPK…KDED).

This sequence belongs to the RbfA family. In terms of assembly, monomer. Binds 30S ribosomal subunits, but not 50S ribosomal subunits or 70S ribosomes.

It localises to the cytoplasm. Its function is as follows. One of several proteins that assist in the late maturation steps of the functional core of the 30S ribosomal subunit. Associates with free 30S ribosomal subunits (but not with 30S subunits that are part of 70S ribosomes or polysomes). Required for efficient processing of 16S rRNA. May interact with the 5'-terminal helix region of 16S rRNA. This chain is Ribosome-binding factor A, found in Phenylobacterium zucineum (strain HLK1).